A 286-amino-acid chain; its full sequence is MSNAEASRVYEIIVESVVNEVREDFENAGIDEQTLQDLKNIWQKKLTETKVTTFSWDNQFNEGNINGVQNDLNFNLATPGVNSSEFNIKEENTGNEGLILPNINSNNNIPHSGETNINTNTVEATNNSGATLNTNTSGNTNADVTSQPKIEVKPEIELTINNANITTVENIDDESEKKDDEEKEEDVEKTRKEKEQIEQVKLQAKKEKRSALLDTDEVGSELDDSDDDYLISEGEEDGPDENLMLCLYDKVTRTKARWKCSLKDGVVTINRNDYTFQKAQVEAEWV.

Disordered stretches follow at residues 120-145 (NTVE…ADVT), 167-195 (TVEN…KEKE), and 208-236 (KRSA…EGEE). Basic and acidic residues predominate over residues 175-195 (SEKKDDEEKEEDVEKTRKEKE). Over residues 214-236 (DTDEVGSELDDSDDDYLISEGEE) the composition is skewed to acidic residues.

It belongs to the TFIIA subunit 1 family. TFIIA is a heterodimer composed of the large TOA1 and a small TOA2 subunits. Interacts with KAP122.

Its subcellular location is the cytoplasm. The protein localises to the nucleus. In terms of biological role, TFIIA is a component of the transcription machinery of RNA polymerase II and implicated in the regulation of basal transcription. Interacts with TBP (the TATA-binding protein). The chain is Transcription initiation factor IIA large subunit (TOA1) from Saccharomyces cerevisiae (strain ATCC 204508 / S288c) (Baker's yeast).